A 416-amino-acid polypeptide reads, in one-letter code: Peptide chain release factor subunit 1 (416 aa).

It belongs to the eukaryotic release factor 1 family. Heterodimer of two subunits, one of which binds GTP.

The protein resides in the cytoplasm. Directs the termination of nascent peptide synthesis (translation) in response to the termination codons UAA, UAG and UGA. The chain is Peptide chain release factor subunit 1 from Haloquadratum walsbyi (strain DSM 16790 / HBSQ001).